The following is a 211-amino-acid chain: ATP phosphoribosyltransferase (211 aa).

Belongs to the ATP phosphoribosyltransferase family. Short subfamily. In terms of assembly, heteromultimer composed of HisG and HisZ subunits.

It localises to the cytoplasm. The enzyme catalyses 1-(5-phospho-beta-D-ribosyl)-ATP + diphosphate = 5-phospho-alpha-D-ribose 1-diphosphate + ATP. It functions in the pathway amino-acid biosynthesis; L-histidine biosynthesis; L-histidine from 5-phospho-alpha-D-ribose 1-diphosphate: step 1/9. In terms of biological role, catalyzes the condensation of ATP and 5-phosphoribose 1-diphosphate to form N'-(5'-phosphoribosyl)-ATP (PR-ATP). Has a crucial role in the pathway because the rate of histidine biosynthesis seems to be controlled primarily by regulation of HisG enzymatic activity. The chain is ATP phosphoribosyltransferase from Pseudomonas putida (strain W619).